Reading from the N-terminus, the 501-residue chain is Lysine--tRNA ligase (501 aa).

2 residues coordinate Mg(2+): glutamate 404 and glutamate 411.

Belongs to the class-II aminoacyl-tRNA synthetase family. As to quaternary structure, homodimer. Mg(2+) serves as cofactor.

The protein resides in the cytoplasm. The catalysed reaction is tRNA(Lys) + L-lysine + ATP = L-lysyl-tRNA(Lys) + AMP + diphosphate. The polypeptide is Lysine--tRNA ligase (Campylobacter jejuni subsp. doylei (strain ATCC BAA-1458 / RM4099 / 269.97)).